Here is a 333-residue protein sequence, read N- to C-terminus: MSQLITIERHILEQQKNFPEATGELTDLLSDVAFAAKLVRREVVRAGLVDILGFAGSTNVQGEEVKKLDLFANDKIINAIGQHGRFAIMGSEENEGIIIPPKNETGSYALLFDPLDGSSNIDVNVSVGTIFSIYRIKSSDPGNASISDCLQKGSEQVAAGYVIYGSSVVMVYTTGHGVHGFTYDPTIGEFLLSHENITTPGSGKYYSINEGSYAQFNDGTKRYLDYIKEEDPATGRPYSTRYIGSLVADFHRNLLTGGVFVYPPTTKHPSGKLRLMYEANPLAFICEQAGGRATDGHRRILDIDPSELHQRTPLYIGSMADVKVAEEFEQGIR.

Mg(2+)-binding residues include E92, D113, L115, and D116. Residues 116–119 (DGSS), N209, Y242, and K272 each bind substrate. Residue E278 coordinates Mg(2+).

Belongs to the FBPase class 1 family. As to quaternary structure, homotetramer. The cofactor is Mg(2+).

It is found in the cytoplasm. It catalyses the reaction beta-D-fructose 1,6-bisphosphate + H2O = beta-D-fructose 6-phosphate + phosphate. Its pathway is carbohydrate biosynthesis; Calvin cycle. The chain is Fructose-1,6-bisphosphatase class 1 from Chlorobium luteolum (strain DSM 273 / BCRC 81028 / 2530) (Pelodictyon luteolum).